We begin with the raw amino-acid sequence, 180 residues long: MKKKTEILDAASIQRALTRMSHEILEKNKGGENLVLIGIKTRGVPLAKRIQQKIKQIESIEVPLGELDITMYRDDLDKVSEQEDPKINSVSIGMDITDKHVILIDDVLFTGRTVRAAMDAVMDVGRPSTIQLGSLVDRGHRELPIRADYVGKNIPTSDREIVVVQLSEQDQEDRVSLYEK.

The short motif at 101–113 is the PRPP-binding element; it reads VILIDDVLFTGRT.

This sequence belongs to the purine/pyrimidine phosphoribosyltransferase family. PyrR subfamily. In terms of assembly, homodimer and homohexamer; in equilibrium.

It carries out the reaction UMP + diphosphate = 5-phospho-alpha-D-ribose 1-diphosphate + uracil. Functionally, regulates transcriptional attenuation of the pyrimidine nucleotide (pyr) operon by binding in a uridine-dependent manner to specific sites on pyr mRNA. This disrupts an antiterminator hairpin in the RNA and favors formation of a downstream transcription terminator, leading to a reduced expression of downstream genes. Also displays a weak uracil phosphoribosyltransferase activity which is not physiologically significant. This is Bifunctional protein PyrR from Oceanobacillus iheyensis (strain DSM 14371 / CIP 107618 / JCM 11309 / KCTC 3954 / HTE831).